The sequence spans 204 residues: LexA repressor (204 aa).

The segment at residues 29–49 (VREICKGVGLSSTSSVHGHLS) is a DNA-binding region (H-T-H motif). Catalysis depends on for autocatalytic cleavage activity residues S126 and K163.

The protein belongs to the peptidase S24 family. As to quaternary structure, homodimer.

It carries out the reaction Hydrolysis of Ala-|-Gly bond in repressor LexA.. Functionally, represses a number of genes involved in the response to DNA damage (SOS response), including recA and lexA. In the presence of single-stranded DNA, RecA interacts with LexA causing an autocatalytic cleavage which disrupts the DNA-binding part of LexA, leading to derepression of the SOS regulon and eventually DNA repair. The chain is LexA repressor from Clostridium novyi (strain NT).